The chain runs to 454 residues: Chromosomal replication initiator protein DnaA (454 aa).

A domain I, interacts with DnaA modulators region spans residues 1-81; it reads MNNSLWQQCA…PNVVLKVGEA (81 aa). The disordered stretch occupies residues 79–110; it reads GEASPTQRDSGSPQRAAATRRKTPNFSSGNTD. The interval 81–117 is domain II; that stretch reads ASPTQRDSGSPQRAAATRRKTPNFSSGNTDVEVPFES. Residues 82–91 show a composition bias toward polar residues; that stretch reads SPTQRDSGSP. The tract at residues 118 to 334 is domain III, AAA+ region; it reads NIHPEYTFDN…GALNRVVANV (217 aa). The ATP site is built by glycine 162, glycine 164, lysine 165, and threonine 166. Residues 335–454 form a domain IV, binds dsDNA region; that stretch reads QLTGRPITID…YRNLIRTLSS (120 aa).

Belongs to the DnaA family. Oligomerizes as a right-handed, spiral filament on DNA at oriC.

Its subcellular location is the cytoplasm. Functionally, plays an essential role in the initiation and regulation of chromosomal replication. ATP-DnaA binds to the origin of replication (oriC) to initiate formation of the DNA replication initiation complex once per cell cycle. Binds the DnaA box (a 9 base pair repeat at the origin) and separates the double-stranded (ds)DNA. Forms a right-handed helical filament on oriC DNA; dsDNA binds to the exterior of the filament while single-stranded (ss)DNA is stabiized in the filament's interior. The ATP-DnaA-oriC complex binds and stabilizes one strand of the AT-rich DNA unwinding element (DUE), permitting loading of DNA polymerase. After initiation quickly degrades to an ADP-DnaA complex that is not apt for DNA replication. Binds acidic phospholipids. The protein is Chromosomal replication initiator protein DnaA of Idiomarina loihiensis (strain ATCC BAA-735 / DSM 15497 / L2-TR).